The chain runs to 420 residues: Pre-mRNA-splicing factor RBM22 (420 aa).

The C3H1-type zinc finger occupies 159–186 (RNRPHICSFWVKGECKRGEECPYRHEKP). The 74-residue stretch at 232–305 (TTLYVGGLGD…RRLNVKWGRS (74 aa)) folds into the RRM domain. 2 disordered regions span residues 303-343 (GRSQ…AAEE) and 372-420 (APPP…HSSP). Residues 309 to 318 (RGKEKDKEGT) show a composition bias toward basic and acidic residues.

This sequence belongs to the SLT11 family. As to quaternary structure, component of the pre-catalytic and catalytic spliceosome complexes. Component of the postcatalytic spliceosome P complex.

It is found in the nucleus. Its subcellular location is the cytoplasm. Required for pre-mRNA splicing as component of the activated spliceosome. Involved in the first step of pre-mRNA splicing. Binds directly to the internal stem-loop (ISL) domain of the U6 snRNA and to the pre-mRNA intron near the 5' splice site during the activation and catalytic phases of the spliceosome cycle. The sequence is that of Pre-mRNA-splicing factor RBM22 (RBM22) from Gallus gallus (Chicken).